The sequence spans 189 residues: Glutathione-dependent formaldehyde-activating enzyme (189 aa).

The CENP-V/GFA domain occupies Phe20 to Asp167. Zn(2+) contacts are provided by Cys27, Cys29, Cys48, Cys50, Cys53, Cys95, and Cys98.

The protein belongs to the Gfa family. The cofactor is Zn(2+).

The enzyme catalyses S-(hydroxymethyl)glutathione = glutathione + formaldehyde. The protein operates within one-carbon metabolism; formaldehyde degradation; formate from formaldehyde (glutathione route): step 1/3. Its function is as follows. Catalyzes the condensation of formaldehyde and glutathione to S-hydroxymethylglutathione. This Rhodopseudomonas palustris (strain BisB18) protein is Glutathione-dependent formaldehyde-activating enzyme.